Here is a 411-residue protein sequence, read N- to C-terminus: Tyrosine--tRNA ligase (411 aa).

Tyrosine 34 lines the L-tyrosine pocket. The 'HIGH' region motif lies at 39-48 (CTATSLHIGS). L-tyrosine-binding residues include tyrosine 171 and glutamine 175. The short motif at 231 to 235 (KMGKT) is the 'KMSKS' region element. Residue lysine 234 coordinates ATP. In terms of domain architecture, S4 RNA-binding spans 345–411 (ISAYELFHEA…GKKRHILVRV (67 aa)).

It belongs to the class-I aminoacyl-tRNA synthetase family. TyrS type 1 subfamily. Homodimer.

It is found in the cytoplasm. It catalyses the reaction tRNA(Tyr) + L-tyrosine + ATP = L-tyrosyl-tRNA(Tyr) + AMP + diphosphate + H(+). Catalyzes the attachment of tyrosine to tRNA(Tyr) in a two-step reaction: tyrosine is first activated by ATP to form Tyr-AMP and then transferred to the acceptor end of tRNA(Tyr). This is Tyrosine--tRNA ligase from Rickettsia africae (strain ESF-5).